The primary structure comprises 316 residues: UPF0761 membrane protein PM1616 (316 aa).

6 consecutive transmembrane segments (helical) span residues 36–56 (MLAL…FPVF), 92–112 (QMSA…INSI), 128–148 (LVFS…LIGA), 172–192 (ILSF…YTVV), 204–224 (IGAL…LWYV), and 236–256 (AMAT…VILI).

The protein belongs to the UPF0761 family.

Its subcellular location is the cell inner membrane. The chain is UPF0761 membrane protein PM1616 from Pasteurella multocida (strain Pm70).